The following is a 47-amino-acid chain: Delta-halcutoxin-Hcg1a (47 aa).

Cystine bridges form between Cys-3–Cys-43, Cys-5–Cys-33, and Cys-26–Cys-44.

This sequence belongs to the sea anemone sodium channel inhibitory toxin family. Type II subfamily.

Its subcellular location is the secreted. It is found in the nematocyst. Is potently lethal to crabs, although it showed neither lethal activity in mice nor hemolytic activity. May bind to voltage-gated sodium channels (Nav), thereby delaying their inactivation during signal transduction. The polypeptide is Delta-halcutoxin-Hcg1a (Isohalcurias carlgreni (Sea anemone)).